We begin with the raw amino-acid sequence, 294 residues long: Putative ribose uptake protein RbsU (294 aa).

The next 10 membrane-spanning stretches (helical) occupy residues 2–24 (NAVNILIGLMPMIGWGIFPVIVG), 34–56 (ILGTTFGTLILAIVVAIFRGTPI), 63–82 (IFCLISGACWALAQIITFHV), 92–114 (MPITTGFQLVGASLWGVFVLGNW), 121–140 (LIGFTAIALIIIGVYLTAWS), 150–172 (GAVKGILLLLVGELGYLGYSAFP), 179–198 (GFQGFLPQAIGMTIVGIIFG), 218–235 (IFSGFFFAFAALTYLISA), 242–264 (LATGFVLSQTSVIFATIGGIYIL), and 274–293 (IAVMVGLLLVLVAGSVTAFI).

The protein belongs to the GRP transporter (TC 2.A.7.5) family.

It is found in the cell membrane. Could be involved in the uptake of ribose. This is Putative ribose uptake protein RbsU (rbsU) from Latilactobacillus sakei subsp. sakei (strain 23K) (Lactobacillus sakei subsp. sakei).